The chain runs to 329 residues: Cytosolic sulfotransferase 6 (329 aa).

74-79 (KCGTTW) is a binding site for 3'-phosphoadenylyl sulfate. Histidine 140 (proton acceptor) is an active-site residue. Residues arginine 162, serine 170, and 295 to 297 (RKG) each bind 3'-phosphoadenylyl sulfate.

Belongs to the sulfotransferase 1 family.

The protein resides in the cytoplasm. Its function is as follows. Sulfotransferase that utilizes 3'-phospho-5'-adenylyl sulfate (PAPS) as sulfonate donor. The polypeptide is Cytosolic sulfotransferase 6 (SOT6) (Arabidopsis thaliana (Mouse-ear cress)).